The primary structure comprises 467 residues: Transcriptional modulator WTM2 (467 aa).

Low complexity predominate over residues 1–12 (MAKSKSSQGASG). 2 disordered regions span residues 1–22 (MAKSKSSQGASGARRKPAPSLY) and 84–121 (TFYDDDDDDDNDDDDEEGNGKTKSAATPNPEYGDAFQD). A compositionally biased stretch (acidic residues) spans 87 to 100 (DDDDDDDNDDDDEE). WD repeat units lie at residues 244 to 282 (PGTNVAHSVRFFNNHLFASCSDDNILRFWDTRTADKPLW), 287 to 327 (PKNG…LATT), and 349 to 389 (SGGD…SRND).

Transcriptional modulator with roles in meiotic regulation and silencing. The protein is Transcriptional modulator WTM2 (WTM2) of Saccharomyces cerevisiae (strain ATCC 204508 / S288c) (Baker's yeast).